We begin with the raw amino-acid sequence, 572 residues long: Na(+)/citrate cotransporter (572 aa).

8 consecutive transmembrane segments (helical) span residues 13–33 (SFVI…LVPD), 53–73 (VIPV…LKVL), 80–100 (VQYM…ATAV), 124–144 (LMLG…NTAT), 218–238 (AASI…VLLG), 255–275 (SWFA…WLWL), 315–335 (PLSY…ILWF), and 357–377 (HVTD…VPSQ). A glycan (N-linked (GlcNAc...) asparagine) is linked at Asn-382. The next 4 membrane-spanning stretches (helical) occupy residues 410 to 430 (VPWG…GCET), 443 to 463 (PLSS…VAMT), 491 to 511 (PLYV…LPVA), and 532 to 552 (TGLV…NTWG). A glycan (N-linked (GlcNAc...) asparagine) is linked at Asn-566.

It belongs to the SLC13A/DASS transporter (TC 2.A.47) family. NADC subfamily. Homodimer. Expressed in liver, testis and brain.

Its subcellular location is the cell membrane. The enzyme catalyses citrate(out) + 4 Na(+)(out) = citrate(in) + 4 Na(+)(in). Its activity is regulated as follows. Inhibited by Li(+). In terms of biological role, high-affinity sodium/citrate cotransporter that mediates citrate entry into cells, which is a critical participant of biochemical pathways. May function in various metabolic processes in which citrate has a critical role such as energy production (Krebs cycle), fatty acid synthesis, cholesterol synthesis, glycolysis, and gluconeogenesis. Transports citrate into the cell in a Na(+)-dependent manner, recognizing the trivalent form of citrate (physiological pH) rather than the divalent form. Can recognize succinate as a substrate, but its affinity for succinate is several fold lower than for citrate. The stoichiometry is probably 4 Na(+) for each carboxylate, irrespective of whether the translocated substrate is divalent or trivalent, rendering the process electrogenic. Involved in the regulation of citrate levels in the brain. The sequence is that of Na(+)/citrate cotransporter (Slc13a5) from Rattus norvegicus (Rat).